Consider the following 212-residue polypeptide: 3-isopropylmalate dehydratase small subunit (212 aa).

Belongs to the LeuD family. LeuD type 1 subfamily. Heterodimer of LeuC and LeuD.

It carries out the reaction (2R,3S)-3-isopropylmalate = (2S)-2-isopropylmalate. It functions in the pathway amino-acid biosynthesis; L-leucine biosynthesis; L-leucine from 3-methyl-2-oxobutanoate: step 2/4. In terms of biological role, catalyzes the isomerization between 2-isopropylmalate and 3-isopropylmalate, via the formation of 2-isopropylmaleate. This is 3-isopropylmalate dehydratase small subunit from Pseudomonas aeruginosa (strain UCBPP-PA14).